Consider the following 390-residue polypeptide: Probable splicing factor YJU2B (390 aa).

The interval 354 to 390 is disordered; that stretch reads DACKASSSSEEENSIDSCATGKSLVADYSDSDSGSEV.

Belongs to the CWC16 family.

The protein localises to the nucleus. Its function is as follows. May be involved in mRNA splicing. This chain is Probable splicing factor YJU2B (yju2b), found in Danio rerio (Zebrafish).